Reading from the N-terminus, the 1143-residue chain is DNA-directed RNA polymerase subunit beta (1143 aa).

Belongs to the RNA polymerase beta chain family. As to quaternary structure, in plastids the minimal PEP RNA polymerase catalytic core is composed of four subunits: alpha, beta, beta', and beta''. When a (nuclear-encoded) sigma factor is associated with the core the holoenzyme is formed, which can initiate transcription.

The protein localises to the plastid. It is found in the chloroplast. It catalyses the reaction RNA(n) + a ribonucleoside 5'-triphosphate = RNA(n+1) + diphosphate. Its function is as follows. DNA-dependent RNA polymerase catalyzes the transcription of DNA into RNA using the four ribonucleoside triphosphates as substrates. The chain is DNA-directed RNA polymerase subunit beta from Porphyra purpurea (Red seaweed).